Reading from the N-terminus, the 213-residue chain is Orotate phosphoribosyltransferase (213 aa).

Lys-26 serves as a coordination point for 5-phospho-alpha-D-ribose 1-diphosphate. Orotate is bound at residue 34–35 (FF). 5-phospho-alpha-D-ribose 1-diphosphate is bound by residues 72 to 73 (YK), Arg-99, Lys-100, Lys-103, His-105, and 124 to 132 (DDVITAGTA). The orotate site is built by Thr-128 and Arg-156.

Belongs to the purine/pyrimidine phosphoribosyltransferase family. PyrE subfamily. In terms of assembly, homodimer. It depends on Mg(2+) as a cofactor.

It catalyses the reaction orotidine 5'-phosphate + diphosphate = orotate + 5-phospho-alpha-D-ribose 1-diphosphate. It functions in the pathway pyrimidine metabolism; UMP biosynthesis via de novo pathway; UMP from orotate: step 1/2. Its function is as follows. Catalyzes the transfer of a ribosyl phosphate group from 5-phosphoribose 1-diphosphate to orotate, leading to the formation of orotidine monophosphate (OMP). The protein is Orotate phosphoribosyltransferase of Escherichia coli O157:H7.